Here is a 322-residue protein sequence, read N- to C-terminus: NADH oxidoreductase HCR (322 aa).

Positions 7 to 107 (QCPWRMQVHH…SDAMGEFTCD (101 aa)) constitute an FAD-binding FR-type domain. An oxidoreductase region spans residues 111 to 213 (EDKFLLLAAG…APYMDWVEQE (103 aa)). A 2Fe-2S ferredoxin-type domain is found at 237–322 (SGLKFTKLQP…CHPQGDLVLA (86 aa)). [2Fe-2S] cluster is bound by residues Cys273, Cys278, Cys281, and Cys311.

It in the N-terminal section; belongs to the FAD-binding oxidoreductase type 6 family. It depends on [2Fe-2S] cluster as a cofactor. FAD is required as a cofactor.

Functionally, NADH oxidoreductase acting in concert with HCP. In Escherichia coli (strain K12), this protein is NADH oxidoreductase HCR (hcr).